Here is a 105-residue protein sequence, read N- to C-terminus: Small ribosomal subunit protein uS10 (105 aa).

Belongs to the universal ribosomal protein uS10 family. Part of the 30S ribosomal subunit.

Its function is as follows. Involved in the binding of tRNA to the ribosomes. The chain is Small ribosomal subunit protein uS10 from Nitratidesulfovibrio vulgaris (strain DSM 19637 / Miyazaki F) (Desulfovibrio vulgaris).